The following is a 94-amino-acid chain: C-C motif chemokine 17 (94 aa).

Residues 1–23 (MAPLKMLALVTLLLGASLQHIHA) form the signal peptide. 2 disulfide bridges follow: Cys-33–Cys-57 and Cys-34–Cys-73.

The protein belongs to the intercrine beta (chemokine CC) family. As to expression, constitutively expressed in thymus. Detected at lower levels in the lung, colon and small intestine. Expressed in stimulated peripheral blood mononuclear cells, but not in resting cells.

The protein resides in the secreted. Its function is as follows. Chemokine, which displays chemotactic activity for T lymphocytes, preferentially Th2 cells, but not monocytes or granulocytes. Therefore plays an important role in a wide range of inflammatory and immunological processes. Acts by binding to CCR4 at T-cell surface. Mediates GM-CSF/CSF2-driven pain and inflammation. In the brain, required to maintain the typical, highly branched morphology of hippocampal microglia under homeostatic conditions. May be important for the appropriate adaptation of microglial morphology and synaptic plasticity to acute lipopolysaccharide (LPS)-induced neuroinflammation. Plays a role in wound healing, mainly by inducing fibroblast migration into the wound. The polypeptide is C-C motif chemokine 17 (CCL17) (Homo sapiens (Human)).